The primary structure comprises 606 residues: Diphthine--ammonia ligase (606 aa).

In the N-terminal section; belongs to the Diphthine--ammonia ligase family. This sequence in the C-terminal section; belongs to the RutC family.

The protein resides in the cytoplasm. The protein localises to the nucleus. It catalyses the reaction diphthine-[translation elongation factor 2] + NH4(+) + ATP = diphthamide-[translation elongation factor 2] + AMP + diphosphate + H(+). The protein operates within protein modification; peptidyl-diphthamide biosynthesis. Functionally, amidase that catalyzes the last step of diphthamide biosynthesis using ammonium and ATP. Diphthamide biosynthesis consists in the conversion of an L-histidine residue in the translation elongation factor eEF-2 (eft201 or eft202) to diphthamide. Has a role in meiosis. The polypeptide is Diphthine--ammonia ligase (mug71) (Schizosaccharomyces pombe (strain 972 / ATCC 24843) (Fission yeast)).